Consider the following 230-residue polypeptide: 3,4-dihydroxy-2-butanone 4-phosphate synthase (230 aa).

D-ribulose 5-phosphate contacts are provided by residues 42 to 43 (RE), D47, 155 to 159 (RRGHT), and E179. E43 contacts Mg(2+). Residue H158 coordinates Mg(2+).

The protein belongs to the DHBP synthase family. As to quaternary structure, homodimer. Mg(2+) serves as cofactor. The cofactor is Mn(2+).

It catalyses the reaction D-ribulose 5-phosphate = (2S)-2-hydroxy-3-oxobutyl phosphate + formate + H(+). It participates in cofactor biosynthesis; riboflavin biosynthesis; 2-hydroxy-3-oxobutyl phosphate from D-ribulose 5-phosphate: step 1/1. In terms of biological role, catalyzes the conversion of D-ribulose 5-phosphate to formate and 3,4-dihydroxy-2-butanone 4-phosphate. This Bordetella bronchiseptica (strain ATCC BAA-588 / NCTC 13252 / RB50) (Alcaligenes bronchisepticus) protein is 3,4-dihydroxy-2-butanone 4-phosphate synthase.